A 390-amino-acid chain; its full sequence is DNA polymerase IV (390 aa).

One can recognise a UmuC domain in the interval 6–187 (VMHVDLDAFF…LDIAVMPGIG (182 aa)). Residues aspartate 10 and aspartate 105 each contribute to the Mg(2+) site. The active site involves glutamate 106.

This sequence belongs to the DNA polymerase type-Y family. Monomer. It depends on Mg(2+) as a cofactor.

Its subcellular location is the cytoplasm. The catalysed reaction is DNA(n) + a 2'-deoxyribonucleoside 5'-triphosphate = DNA(n+1) + diphosphate. In terms of biological role, poorly processive, error-prone DNA polymerase involved in untargeted mutagenesis. Copies undamaged DNA at stalled replication forks, which arise in vivo from mismatched or misaligned primer ends. These misaligned primers can be extended by PolIV. Exhibits no 3'-5' exonuclease (proofreading) activity. May be involved in translesional synthesis, in conjunction with the beta clamp from PolIII. This is DNA polymerase IV from Dehalococcoides mccartyi (strain CBDB1).